The sequence spans 100 residues: NADH-quinone oxidoreductase subunit K (100 aa).

Helical transmembrane passes span 4 to 24 (LFHG…SLIV), 28 to 48 (ILFI…ALIV), and 60 to 80 (IMYI…LALL).

This sequence belongs to the complex I subunit 4L family. As to quaternary structure, NDH-1 is composed of 13 different subunits. Subunits NuoA, H, J, K, L, M, N constitute the membrane sector of the complex.

It is found in the cell membrane. It catalyses the reaction a quinone + NADH + 5 H(+)(in) = a quinol + NAD(+) + 4 H(+)(out). Its function is as follows. NDH-1 shuttles electrons from NADH, via FMN and iron-sulfur (Fe-S) centers, to quinones in the respiratory chain. The immediate electron acceptor for the enzyme in this species is believed to be ubiquinone. Couples the redox reaction to proton translocation (for every two electrons transferred, four hydrogen ions are translocated across the cytoplasmic membrane), and thus conserves the redox energy in a proton gradient. The chain is NADH-quinone oxidoreductase subunit K from Buchnera aphidicola subsp. Acyrthosiphon pisum (strain 5A).